The chain runs to 89 residues: UPF0175 protein APE_0276a (89 aa).

The protein belongs to the UPF0175 family.

This Aeropyrum pernix (strain ATCC 700893 / DSM 11879 / JCM 9820 / NBRC 100138 / K1) protein is UPF0175 protein APE_0276a.